The primary structure comprises 293 residues: Elongation factor Ts (293 aa).

Residues 79–82 form an involved in Mg(2+) ion dislocation from EF-Tu region; that stretch reads TDFV.

The protein belongs to the EF-Ts family.

The protein localises to the cytoplasm. In terms of biological role, associates with the EF-Tu.GDP complex and induces the exchange of GDP to GTP. It remains bound to the aminoacyl-tRNA.EF-Tu.GTP complex up to the GTP hydrolysis stage on the ribosome. The sequence is that of Elongation factor Ts from Exiguobacterium sibiricum (strain DSM 17290 / CCUG 55495 / CIP 109462 / JCM 13490 / 255-15).